The primary structure comprises 607 residues: Guanine nucleotide-binding protein-like 1 (607 aa).

Positions 1–14 (MPRKKPFSVKQKKK) are enriched in basic residues. The segment at 1 to 81 (MPRKKPFSVK…GPRGYDPNRY (81 aa)) is disordered. Over residues 15-26 (QLQDKRERKRGL) the composition is skewed to basic and acidic residues. Phosphoserine occurs at positions 32, 33, and 34. 2 positions are modified to phosphothreonine: threonine 48 and threonine 50. Phosphoserine is present on residues serine 51 and serine 68. Positions 178 to 418 (WRQLWRVLEM…LCDCPGLIFP (241 aa)) constitute a CP-type G domain. Residue 225 to 228 (NKVD) coordinates GTP. Phosphoserine is present on serine 324. Residues 367-374 (GFPNVGKS) and 411-415 (DCPGL) each bind GTP. The tract at residues 547–607 (GPAGDEEEEE…PYALLGEDEC (61 aa)) is disordered. Over residues 550–584 (GDEEEEEEEELSSSCEEEGEEDRDADEEGEGDEET) the composition is skewed to acidic residues. 3 positions are modified to phosphoserine: serine 561, serine 562, and serine 563.

It belongs to the TRAFAC class YlqF/YawG GTPase family.

In terms of biological role, possible regulatory or functional link with the histocompatibility cluster. This Pan troglodytes (Chimpanzee) protein is Guanine nucleotide-binding protein-like 1 (GNL1).